Consider the following 513-residue polypeptide: ATP synthase subunit alpha (513 aa).

169-176 (GDRQIGKT) contributes to the ATP binding site.

It belongs to the ATPase alpha/beta chains family. F-type ATPases have 2 components, CF(1) - the catalytic core - and CF(0) - the membrane proton channel. CF(1) has five subunits: alpha(3), beta(3), gamma(1), delta(1), epsilon(1). CF(0) has three main subunits: a(1), b(2) and c(9-12). The alpha and beta chains form an alternating ring which encloses part of the gamma chain. CF(1) is attached to CF(0) by a central stalk formed by the gamma and epsilon chains, while a peripheral stalk is formed by the delta and b chains.

The protein localises to the cell inner membrane. It catalyses the reaction ATP + H2O + 4 H(+)(in) = ADP + phosphate + 5 H(+)(out). Produces ATP from ADP in the presence of a proton gradient across the membrane. The alpha chain is a regulatory subunit. This Shewanella piezotolerans (strain WP3 / JCM 13877) protein is ATP synthase subunit alpha.